Consider the following 299-residue polypeptide: ATP phosphoribosyltransferase (299 aa).

It belongs to the ATP phosphoribosyltransferase family. Long subfamily. In terms of assembly, equilibrium between an active dimeric form, an inactive hexameric form and higher aggregates. Interconversion between the various forms is largely reversible and is influenced by the natural substrates and inhibitors of the enzyme. Mg(2+) is required as a cofactor.

The protein localises to the cytoplasm. The catalysed reaction is 1-(5-phospho-beta-D-ribosyl)-ATP + diphosphate = 5-phospho-alpha-D-ribose 1-diphosphate + ATP. It participates in amino-acid biosynthesis; L-histidine biosynthesis; L-histidine from 5-phospho-alpha-D-ribose 1-diphosphate: step 1/9. Feedback inhibited by histidine. Catalyzes the condensation of ATP and 5-phosphoribose 1-diphosphate to form N'-(5'-phosphoribosyl)-ATP (PR-ATP). Has a crucial role in the pathway because the rate of histidine biosynthesis seems to be controlled primarily by regulation of HisG enzymatic activity. The protein is ATP phosphoribosyltransferase of Escherichia coli O17:K52:H18 (strain UMN026 / ExPEC).